A 444-amino-acid chain; its full sequence is Ras-related protein RabX (444 aa).

29–36 (GGDVCSKN) contacts GTP. Positions 51–58 (LIQVFDDY) match the Effector region motif. Position 73-77 (73-77 (EFSSI)) interacts with GTP. The tract at residues 91 to 136 (ENNKNKNNNNNYNYNNNNYNNNNNNNNNNNNNNNNNNNNNNNNNNS) is disordered. A compositionally biased stretch (low complexity) spans 95–135 (NKNNNNNYNYNNNNYNNNNNNNNNNNNNNNNNNNNNNNNNN). 207–210 (NDSN) provides a ligand contact to GTP. Disordered regions lie at residues 213–232 (TPNF…SNII) and 298–401 (LQGD…NNDL). Low complexity-rich tracts occupy residues 217–232 (SDSS…SNII) and 303–399 (NNNN…TYNN). C439 carries S-palmitoyl cysteine lipidation. C441 carries the post-translational modification Cysteine methyl ester. A lipid anchor (S-geranylgeranyl cysteine) is attached at C441. The propeptide at 442–444 (NLM) is removed in mature form.

This sequence belongs to the small GTPase superfamily. Rab family.

Its subcellular location is the cell membrane. The chain is Ras-related protein RabX (rabX) from Dictyostelium discoideum (Social amoeba).